The chain runs to 1567 residues: Putative DEAH-box ATP-dependent helicase UM11114 (1567 aa).

Disordered stretches follow at residues 1-95 and 670-734; these read MAPR…PGSK and ESSV…ETRR. A compositionally biased stretch (polar residues) spans 10–20; sequence IKSSGTTSSKA. 2 stretches are compositionally biased toward low complexity: residues 39-48 and 55-73; these read TKAAKQQQTQ and AISATGSSSSSSPVAAASS. Residues 74 to 83 are compositionally biased toward gly residues; the sequence is AGGGGGGGQG. 2 stretches are compositionally biased toward polar residues: residues 670–687 and 713–726; these read ESSVEATPETSRAATPTG and LQRQQRQLHTSPSY. The Helicase ATP-binding domain maps to 746–924; that stretch reads LGLIRSNRVV…FGKAPCISIP (179 aa). 759 to 766 provides a ligand contact to ATP; that stretch reads GETGCGKT. The short motif at 871–874 is the DEAH box element; the sequence is DEVH. A Helicase C-terminal domain is found at 1003–1184; that stretch reads VVRYVVERAE…SLFLEVKSMR (182 aa).

It belongs to the DEAD box helicase family. DEAH subfamily.

This is Putative DEAH-box ATP-dependent helicase UM11114 from Mycosarcoma maydis (Corn smut fungus).